The primary structure comprises 184 residues: Protein PLANT CADMIUM RESISTANCE 4 (184 aa).

Polar residues predominate over residues 1-10; that stretch reads MGRPGSQPNE. The disordered stretch occupies residues 1 to 21; sequence MGRPGSQPNEAQPPPVQVQPT. The helical transmembrane segment at 96–116 threads the bilayer; the sequence is GGLLYGMIFFIGVPFVYSCMF.

It belongs to the cornifelin family.

The protein localises to the membrane. May be involved in heavy metals transport. The sequence is that of Protein PLANT CADMIUM RESISTANCE 4 (PCR4) from Arabidopsis thaliana (Mouse-ear cress).